An 849-amino-acid polypeptide reads, in one-letter code: Protein lap1 (849 aa).

LRR repeat units lie at residues 18-39, 41-62, 64-85, 87-108, 110-131, 133-155, 156-177, 179-200, 202-224, 225-246, 248-269, 271-292, 294-315, 317-338, 340-362, 363-384, and 386-407; these read VIDKLDYSNTPLTDFPEVWQHE, TLEELYLSTTRLQALPPQLFYC, GLRVLHVNSNNLESIPQAIGSL, QLQHLDLNRNLIVNVPEEIKSC, HLTHLDLSCNSLQRLPDAITSL, SLQELLLNETYLEFLPANFGRLV, NLRILELRLNNLMTLPKSMVRL, NLQRLDIGGNEFTELPEVVGEL, SLRELWIDFNQIRRVSANIGKLR, DLQHFEANGNLLDTLPSELSNW, NVEVLSICSNSLEAFPFSVGML, SLVTFKCESNGLTELPDSISYL, QLEELVLSHNKLIRLPSTIGML, SLRFLFADDNQLRQLPDELCSC, QLSVLSVANNQLSALPQNIGNLS, KMKVLNVVNNYINALPVSMLNL, and NLTSMWLSDNQSQPLVPLQYLD. The disordered stretch occupies residues 716 to 752; it reads NNISNNLEPNPEEEDQELDDTMSQHSLNSTATNNTSK. Positions 725 to 735 are enriched in acidic residues; sequence NPEEEDQELDD. The span at 736–752 shows a compositional bias: polar residues; it reads TMSQHSLNSTATNNTSK. The PDZ domain occupies 770–849; that stretch reads VKQVTLKWEN…TVMNIMLSRK (80 aa).

Belongs to the LAP (LRR and PDZ) protein family.

Its function is as follows. May have a role in assembling adherens junctions. The polypeptide is Protein lap1 (Drosophila melanogaster (Fruit fly)).